Here is an 839-residue protein sequence, read N- to C-terminus: Transient receptor potential cation channel subfamily V member 1 (839 aa).

The segment at 1–60 (MEKWASLDSDESEPPAQENSCPDPPDRDPNSKPPPAKPHIFATRSRTRLFGKGDSEEASP) is disordered. At 1 to 433 (MEKWASLDSD…QDKWDRFVKR (433 aa)) the chain is on the cytoplasmic side. Residues 111–139 (RLYDRRSIFDAVAQSNCQELESLLSFLQK) form an ANK 1 repeat. R116 contacts ATP. S117 carries the phosphoserine; by PKA and PKD modification. Phosphothreonine; by PKA; in vitro is present on T145. The stretch at 154–186 (TGKTCLLKAMLNLHNGQNDTIALLLDIARKTDS) is one ANK 2 repeat. ATP contacts are provided by residues K156, K161, N165, 200–203 (YKGQ), and 211–212 (ER). ANK repeat units lie at residues 204-229 (TALH…ADVQ), 250-277 (ELPL…QPAD), 286-322 (NTVL…KLHP), and 336-359 (TPLA…REIH). T371 carries the post-translational modification Phosphothreonine; by PKA; in vitro. The ANK 7 repeat unit spans residues 394-416 (NSVLEVIAYSSSETPNRHDMLLV). A helical transmembrane segment spans residues 434-455 (IFYFNFFVYCLYMIIFTTAAYY). Over 456–472 (RPVEGLPPYKLNNTVGD) the chain is Extracellular. A helical transmembrane segment spans residues 473–497 (YFRVTGEILSVSGGVYFFFRGIQYF). Over 498 to 510 (LQRRPSLKSLFVD) the chain is Cytoplasmic. Residue S503 is modified to Phosphoserine; by PKC/PRKCE. The chain crosses the membrane as a helical span at residues 511 to 532 (SYSEILFFVQSLFMLVSVVLYF). 512–513 (YS) lines the resiniferatoxin pocket. Topologically, residues 533-535 (SHR) are extracellular. The chain crosses the membrane as a helical span at residues 536–556 (KEYVASMVFSLAMGWTNMLYY). Resiniferatoxin is bound by residues T551 and R558. Topologically, residues 557-559 (TRG) are cytoplasmic. The chain crosses the membrane as a helical span at residues 560–598 (FQQMGIYAVMIEKMILRDLCRFMFVYLVFLFGFSTAVVT). The Extracellular portion of the chain corresponds to 599–630 (LIEDGKNNSLPVESPPHKCRGSACRPGNSYNS). The N-linked (GlcNAc...) asparagine glycan is linked to N605. An intramembrane region (pore-forming) is located at residues 631 to 652 (LYSTCLELFKFTIGMGDLEFTE). Residue G644 participates in Na(+) binding. A Selectivity filter motif is present at residues 644 to 647 (GMGD). D647 serves as a coordination point for Ca(2+). Topologically, residues 653-656 (NYDF) are extracellular. A helical membrane pass occupies residues 657–683 (KAVFIILLLAYVILTYILLLNMLIALM). Topologically, residues 684-839 (GETVNKIAQE…FKDSMAPGEK (156 aa)) are cytoplasmic. Residues 685–713 (ETVNKIAQESKNIWKLQRAITILDTEKSF) are AD. T705 is subject to Phosphothreonine. Residues 768 to 802 (EGVKRTLSFSLRSGRVSGRNWKNFALVPLLRDAST) form an interaction with calmodulin region. S775 carries the post-translational modification Phosphoserine. A required for PIP2-mediated channel inhibition region spans residues 778–793 (LRSGRVSGRNWKNFAL). Position 801 is a phosphoserine; by PKC/PRKCE and PKC/PRKCZ (S801). A compositionally biased stretch (basic and acidic residues) spans 802–815 (TRDRHSTQPEEVQL). The segment at 802–839 (TRDRHSTQPEEVQLKHYTGSLKPEDAEVFKDSMAPGEK) is disordered. The residue at position 821 (S821) is a Phosphoserine. Residues 823–839 (KPEDAEVFKDSMAPGEK) show a composition bias toward basic and acidic residues.

Belongs to the transient receptor (TC 1.A.4) family. TrpV subfamily. TRPV1 sub-subfamily. In terms of assembly, homotetramer. May also form a heteromeric channel with TRPV3. Interacts with CALM, PRKCM and CSK. Interacts with PRKCG and NTRK1, probably by forming a trimeric complex. Interacts with PIRT. Interacts with the Scolopendra mutilans RhTx toxin. Interacts with TMEM100. Interacts with PACS2. Phosphorylation by PKA reverses capsaicin-induced dephosphorylation at multiple sites probably including Ser-117 as a major phosphorylation site. Phosphorylation by CAMKII seems to regulate binding to vanilloids. Phosphorylated and modulated by PRKCE, PRKCM and probably PRKCZ. Dephosphorylation by calcineurin seems to lead to receptor desensitization and phosphorylation by CAMKII recovers activity. In terms of tissue distribution, detected in neurons in the root ganglia (at protein level). Detected in dorsal root ganglia.

The protein localises to the postsynaptic cell membrane. Its subcellular location is the cell projection. It is found in the dendritic spine membrane. It localises to the cell membrane. The catalysed reaction is Ca(2+)(in) = Ca(2+)(out). It carries out the reaction Mg(2+)(in) = Mg(2+)(out). The enzyme catalyses Na(+)(in) = Na(+)(out). It catalyses the reaction K(+)(in) = K(+)(out). The channel is sensitized by ATP binding. Repeated stimulation with capsaicin gives rise to progressively smaller responses, due to desensitization. This desensitization is triggered by the influx of calcium ions and is inhibited by elevated ATP levels. Ca(2+) and CALM displace ATP from its binding site and trigger a conformation change that leads to a closed, desensitized channel. The double-knot toxin (DkTx) from the Chinese earth tiger tarantula activates the channel and traps it in an open conformation. The Scolopendra mutilans RhTx toxin potentiates the heat activation pathway mediated by this channel by binding to the charge-rich outer pore region (in an activated state). Channel activity is activated via the interaction with PIRT and phosphatidylinositol 4,5-bisphosphate (PIP2). Both PIRT and PIP2 are required to activate channel activity. Intracellular PIP2 inhibits desensitization. Functionally, non-selective calcium permeant cation channel involved in detection of noxious chemical and thermal stimuli. Seems to mediate proton influx and may be involved in intracellular acidosis in nociceptive neurons. Involved in mediation of inflammatory pain and hyperalgesia. Sensitized by a phosphatidylinositol second messenger system activated by receptor tyrosine kinases, which involves PKC isozymes and PCL. Activation by vanilloids, like capsaicin, and temperatures higher than 42 degrees Celsius. Upon activation, exhibits a time- and Ca(2+)-dependent outward rectification, followed by a long-lasting refractory state. Mild extracellular acidic pH (6.5) potentiates channel activation by noxious heat and vanilloids, whereas acidic conditions (pH &lt;6) directly activate the channel. Can be activated by endogenous compounds, including 12-hydroperoxytetraenoic acid and bradykinin. Acts as ionotropic endocannabinoid receptor with central neuromodulatory effects. Triggers a form of long-term depression (TRPV1-LTD) mediated by the endocannabinoid anandamine in the hippocampus and nucleus accumbens by affecting AMPA receptors endocytosis. The sequence is that of Transient receptor potential cation channel subfamily V member 1 (Trpv1) from Mus musculus (Mouse).